Here is a 62-residue protein sequence, read N- to C-terminus: Large ribosomal subunit protein bL28 (62 aa).

The interval 1-26 is disordered; sequence MARKCYVTGKSPKSGNNRSHALNKTK. A compositionally biased stretch (polar residues) spans 11 to 20; it reads SPKSGNNRSH.

The protein belongs to the bacterial ribosomal protein bL28 family.

In Exiguobacterium sibiricum (strain DSM 17290 / CCUG 55495 / CIP 109462 / JCM 13490 / 255-15), this protein is Large ribosomal subunit protein bL28.